Consider the following 721-residue polypeptide: bZIP transcription factor 17 (721 aa).

2 disordered regions span residues 1–51 (MAEP…LMSD) and 87–232 (QEQF…EKKR). Over 1-366 (MAEPITKEQP…KSEAKTKKVA (366 aa)) the chain is Cytoplasmic. Pro residues predominate over residues 9–25 (QPPPPAPDPNSTYPPPS). Positions 125–141 (ESPRDSDDRCSGADHNL) are enriched in basic and acidic residues. Polar residues predominate over residues 146–170 (PLSSQGSGNCGSDVSEATNESSPKS). Basic and acidic residues predominate over residues 204-216 (DESRNSKYRRSGE). The region spanning 228 to 288 (DEKKRARLMR…AENATLRQQL (61 aa)) is the bZIP domain. The tract at residues 230–261 (KKRARLMRNRESAQLSRQRKKHYVEELEEKVR) is basic motif. A leucine-zipper region spans residues 267 to 274 (ITDLNGKI). Residues 337-359 (PRLKPQNTLGTSKAKKSESKKSE) form a disordered region. A helical membrane pass occupies residues 367–387 (SISFLGLLFCLFLFGALAPIV). At 388-721 (NVNYGGISGA…RSGAPHLVTT (334 aa)) the chain is on the lumenal side. The segment covering 422 to 436 (TSRSGAGTGVSNSNG) has biased composition (polar residues). The interval 422–462 (TSRSGAGTGVSNSNGMHRGRDSDRGARKNISATESSVTPGN) is disordered. Asn450, Asn462, Asn609, and Asn617 each carry an N-linked (GlcNAc...) asparagine glycan. A compositionally biased stretch (polar residues) spans 451–462 (ISATESSVTPGN). The RRIL cleavage motif signature appears at 627 to 630 (RRIL). 2 N-linked (GlcNAc...) asparagine glycosylation sites follow: Asn643 and Asn651.

Belongs to the bZIP family. In terms of assembly, interacts with BZIP28.

The protein localises to the endoplasmic reticulum membrane. Its subcellular location is the golgi apparatus membrane. It is found in the nucleus. Its function is as follows. Transcriptional activator involved in salt and osmotic stress responses. Functions as a stress sensor and transducer in a signaling pathway that resembles an ER stress response. Following salt stress, BZIP17 is cleaved by SBT6.1 (S1P) and S2P at the C-terminus and the N-terminal bZIP component is translocated to the nucleus, where it activates the expression of salt stress response genes. Functions as a stress sensor and transducer in ER stress signaling pathway. ER stress induces proteolysis of BZIP17 by SBT6.1 (S1P) and S2P, and the N-terminal bZIP component is translocated to the nucleus, where it activates the expression and production of ER chaperones, as well as protein involved in brassinosteroid (BR) signaling, which is required for stress acclimation and growth. The chain is bZIP transcription factor 17 from Arabidopsis thaliana (Mouse-ear cress).